Consider the following 250-residue polypeptide: Insertion sequence IS232 putative ATP-binding protein (250 aa).

108–115 lines the ATP pocket; it reads GPSGVGKT.

It belongs to the IS21/IS1162 putative ATP-binding protein family.

The polypeptide is Insertion sequence IS232 putative ATP-binding protein (Bacillus thuringiensis subsp. berliner).